The chain runs to 60 residues: Acidic phospholipase A2 (60 aa).

Tyr27, Gly29, and Gly31 together coordinate Ca(2+). Cys28 and Cys44 are joined by a disulfide. His47 is an active-site residue. Asp48 is a binding site for Ca(2+).

It belongs to the phospholipase A2 family. Group II subfamily. D49 sub-subfamily. As to quaternary structure, monomer. The cofactor is Ca(2+). In terms of tissue distribution, expressed by the venom gland.

Its subcellular location is the secreted. The enzyme catalyses a 1,2-diacyl-sn-glycero-3-phosphocholine + H2O = a 1-acyl-sn-glycero-3-phosphocholine + a fatty acid + H(+). In terms of biological role, snake venom phospholipase A2 (PLA2) that exhibits an indirect hemolytic activity, a low myotoxicity, and induces edema. In addition, this enzyme has been shown to induce the release of some pro- and anti-inflammatory cytokines from human PBMC (IL12B, TNF-alpha, IL1B and IL6 but not variation has been observed for IL-8 and IL-10). PLA2 catalyzes the calcium-dependent hydrolysis of the 2-acyl groups in 3-sn-phosphoglycerides. This chain is Acidic phospholipase A2, found in Bothrops leucurus (Whitetail lancehead).